The following is a 627-amino-acid chain: MACPF domain-containing protein At1g14780 (627 aa).

The region spanning 1 to 339 (MSRDGGDVIE…PPLMDLQYFL (339 aa)) is the MACPF domain.

This sequence belongs to the complement C6/C7/C8/C9 (TC 1.C.39) family.

Its function is as follows. Negatively controls the salicylic acid (SA)-mediated pathway of programmed cell death in plant immunity. The chain is MACPF domain-containing protein At1g14780 from Arabidopsis thaliana (Mouse-ear cress).